The chain runs to 245 residues: Adenosylcobinamide-GDP ribazoletransferase (245 aa).

Transmembrane regions (helical) follow at residues 31–51 (FGRA…VLYA), 61–81 (PLLQ…ALHL), 113–133 (VAVV…AALL), 138–158 (AGLL…LFLT), and 192–212 (LAFG…FAWL).

This sequence belongs to the CobS family. The cofactor is Mg(2+).

It localises to the cell inner membrane. It carries out the reaction alpha-ribazole + adenosylcob(III)inamide-GDP = adenosylcob(III)alamin + GMP + H(+). The catalysed reaction is alpha-ribazole 5'-phosphate + adenosylcob(III)inamide-GDP = adenosylcob(III)alamin 5'-phosphate + GMP + H(+). It participates in cofactor biosynthesis; adenosylcobalamin biosynthesis; adenosylcobalamin from cob(II)yrinate a,c-diamide: step 7/7. Its function is as follows. Joins adenosylcobinamide-GDP and alpha-ribazole to generate adenosylcobalamin (Ado-cobalamin). Also synthesizes adenosylcobalamin 5'-phosphate from adenosylcobinamide-GDP and alpha-ribazole 5'-phosphate. The polypeptide is Adenosylcobinamide-GDP ribazoletransferase (Pseudomonas aeruginosa (strain ATCC 15692 / DSM 22644 / CIP 104116 / JCM 14847 / LMG 12228 / 1C / PRS 101 / PAO1)).